The primary structure comprises 215 residues: Small ribosomal subunit protein uS5 (215 aa).

The interval 1–62 (MTDSSPQSNP…QERDSEWQER (62 aa)) is disordered. Over residues 9 to 28 (NPNAVPGAADVPAAAEGQQQ) the composition is skewed to low complexity. Residues 29-61 (EQRRGGGRGERGDRRGGRRGDRRNQERDSEWQE) show a composition bias toward basic and acidic residues. Residues 59–122 (WQERVVQIRR…ADGKKHLVKV (64 aa)) enclose the S5 DRBM domain.

This sequence belongs to the universal ribosomal protein uS5 family. As to quaternary structure, part of the 30S ribosomal subunit. Contacts proteins S4 and S8.

Functionally, with S4 and S12 plays an important role in translational accuracy. Located at the back of the 30S subunit body where it stabilizes the conformation of the head with respect to the body. In Parasynechococcus marenigrum (strain WH8102), this protein is Small ribosomal subunit protein uS5.